Reading from the N-terminus, the 551-residue chain is Calcium-dependent protein kinase 3 (551 aa).

Positions 1–57 are disordered; it reads MGNCCRSPAAAAREDVKSSHFPASAGKKKPHQARNGGVGGGGGGGGGGGGGGGAGQK. Residue Gly2 is the site of N-myristoyl glycine attachment. The segment covering 36–55 has biased composition (gly residues); the sequence is GGVGGGGGGGGGGGGGGGAG. A Protein kinase domain is found at 77-335; it reads YALDRELGRG…AKQVLEHPWL (259 aa). ATP is bound by residues 83–91 and Lys106; that span reads LGRGEFGVT. The active-site Proton acceptor is the Asp201. An autoinhibitory domain region spans residues 341–371; the sequence is APNVPLGDIVKSRLKQFSRMNRFKRRALRVI. EF-hand domains follow at residues 378 to 413, 414 to 449, 450 to 485, and 486 to 521; these read EEVE…FGSH, LAES…LQRM, ANDE…DGAG, and DSME…GTDW. Positions 391, 393, 395, 402, 427, 429, 438, 463, 465, 467, 469, 474, 499, 501, 503, 505, and 510 each coordinate Ca(2+).

This sequence belongs to the protein kinase superfamily. Ser/Thr protein kinase family. CDPK subfamily. Expressed in roots and developing seeds.

The protein resides in the membrane. The catalysed reaction is L-seryl-[protein] + ATP = O-phospho-L-seryl-[protein] + ADP + H(+). It carries out the reaction L-threonyl-[protein] + ATP = O-phospho-L-threonyl-[protein] + ADP + H(+). Its activity is regulated as follows. Activated by calcium. Autophosphorylation may play an important role in the regulation of the kinase activity. Its function is as follows. May play a role in signal transduction pathways that involve calcium as a second messenger. This Oryza sativa subsp. japonica (Rice) protein is Calcium-dependent protein kinase 3.